A 198-amino-acid polypeptide reads, in one-letter code: Holliday junction branch migration complex subunit RuvA (198 aa).

Positions 1–64 (MYEYIKGKYI…EDFIGLYGFD (64 aa)) are domain I. Residues 65–143 (SKEELEMFKL…PDELVDSSLE (79 aa)) form a domain II region. Positions 144-149 (IDTKDN) are flexible linker. The segment at 150–198 (ENVMALSEALSALIALGYSEKEAESVLKKIDKNDSVENIIKNALKALMG) is domain III.

It belongs to the RuvA family. Homotetramer. Forms an RuvA(8)-RuvB(12)-Holliday junction (HJ) complex. HJ DNA is sandwiched between 2 RuvA tetramers; dsDNA enters through RuvA and exits via RuvB. An RuvB hexamer assembles on each DNA strand where it exits the tetramer. Each RuvB hexamer is contacted by two RuvA subunits (via domain III) on 2 adjacent RuvB subunits; this complex drives branch migration. In the full resolvosome a probable DNA-RuvA(4)-RuvB(12)-RuvC(2) complex forms which resolves the HJ.

It is found in the cytoplasm. In terms of biological role, the RuvA-RuvB-RuvC complex processes Holliday junction (HJ) DNA during genetic recombination and DNA repair, while the RuvA-RuvB complex plays an important role in the rescue of blocked DNA replication forks via replication fork reversal (RFR). RuvA specifically binds to HJ cruciform DNA, conferring on it an open structure. The RuvB hexamer acts as an ATP-dependent pump, pulling dsDNA into and through the RuvAB complex. HJ branch migration allows RuvC to scan DNA until it finds its consensus sequence, where it cleaves and resolves the cruciform DNA. The polypeptide is Holliday junction branch migration complex subunit RuvA (Clostridium beijerinckii (strain ATCC 51743 / NCIMB 8052) (Clostridium acetobutylicum)).